Here is a 333-residue protein sequence, read N- to C-terminus: MCAQYCISFADVEKAHLNIQDSVHLTPVLTSSILNQIAGRNLFFKCELFQKTGSFKIRGALNAIRGLIPDTLEGKPKAVVTHSSGNHGQALTYAAKLEGIPAYIVVPQTAPNCKKLAIQAYGASIVYSEPSDESRENVAQRIIQETEGILVHPNQEPAVIAGQGTIALEVLNQVPLVDALVVPVGGGGMVAGIAITIKTLKPSVKVYAAEPSNADDCYQSKLKGELTPNLHPPETIADGVKSSIGLNTWPIIRDLVDDVFTVTEDEIKYATQLVWERMKLLIEPTAGVGLAAVLSQHFQTVSPEVKNICIVLSGGNVDLTSLSWVKQAERPAP.

Residue Glu13 participates in Mg(2+) binding. ATP is bound by residues Ser31, Ser32, Ile33, Lys51, and Thr52. Lys56 acts as the Proton acceptor in catalysis. An N6-(pyridoxal phosphate)lysine modification is found at Lys56. Pro69 serves as a coordination point for Ca(2+). Thr71 carries the phosphothreonine modification. A Ca(2+)-binding site is contributed by Thr81. Ser84 serves as the catalytic Proton acceptor. Asn86 lines the pyridoxal 5'-phosphate pocket. Gln89 lines the ATP pocket. Cys113 bears the S-nitrosocysteine mark. Tyr121 serves as a coordination point for ATP. Asn154 contributes to the pyridoxal 5'-phosphate binding site. Asp178 is a Mg(2+) binding site. Pyridoxal 5'-phosphate-binding residues include Gly185, Gly186, Gly187, Gly188, and Met189. Mg(2+) contacts are provided by Glu210, Ala214, Asp216, and Asn247. The Ca(2+) site is built by Glu210, Ala214, Asp216, and Asn247. 3 residues coordinate Mn(2+): Glu210, Ala214, and Asp216. An ATP-binding site is contributed by Lys279. Ser313 contacts pyridoxal 5'-phosphate. Residue Asn316 participates in ATP binding.

The protein belongs to the serine/threonine dehydratase family. In terms of assembly, homodimer. Mg(2+) serves as cofactor. Requires Mn(2+) as cofactor. It depends on Ca(2+) as a cofactor. The cofactor is pyridoxal 5'-phosphate. In terms of processing, S-nitrosylated, leading to decrease the enzyme activity. As to expression, expressed in the cerebellum and frontal cortex (at protein level).

The catalysed reaction is L-serine = D-serine. It carries out the reaction D-serine = pyruvate + NH4(+). It catalyses the reaction L-serine = pyruvate + NH4(+). Its activity is regulated as follows. Allosterically activated by magnesium, and possibly also other divalent metal cations. Allosterically activated by ATP, ADP or GTP. Competitively inhibited by malonate. Its function is as follows. Catalyzes the synthesis of D-serine from L-serine. D-serine is a key coagonist with glutamate at NMDA receptors. Has dehydratase activity towards both L-serine and D-serine. This is Serine racemase (Srr) from Rattus norvegicus (Rat).